The chain runs to 238 residues: Ribitol-5-phosphate cytidylyltransferase 2 (238 aa).

CTP contacts are provided by residues 7–10 and 81–87; these read LAGG and GTDRNET.

It belongs to the IspD/TarI cytidylyltransferase family. TarI subfamily.

It carries out the reaction D-ribitol 5-phosphate + CTP + H(+) = CDP-L-ribitol + diphosphate. The protein operates within cell wall biogenesis; poly(ribitol phosphate) teichoic acid biosynthesis. Functionally, catalyzes the transfer of the cytidylyl group of CTP to D-ribitol 5-phosphate. The protein is Ribitol-5-phosphate cytidylyltransferase 2 of Staphylococcus aureus (strain MRSA252).